We begin with the raw amino-acid sequence, 368 residues long: Histidinol-phosphate aminotransferase (368 aa).

At Lys223 the chain carries N6-(pyridoxal phosphate)lysine.

This sequence belongs to the class-II pyridoxal-phosphate-dependent aminotransferase family. Histidinol-phosphate aminotransferase subfamily. Homodimer. Pyridoxal 5'-phosphate is required as a cofactor.

It carries out the reaction L-histidinol phosphate + 2-oxoglutarate = 3-(imidazol-4-yl)-2-oxopropyl phosphate + L-glutamate. Its pathway is amino-acid biosynthesis; L-histidine biosynthesis; L-histidine from 5-phospho-alpha-D-ribose 1-diphosphate: step 7/9. This is Histidinol-phosphate aminotransferase (hisC) from Sinorhizobium fredii (strain NBRC 101917 / NGR234).